The following is a 427-amino-acid chain: Dihydroorotase (427 aa).

The Zn(2+) site is built by His-57 and His-59. Substrate-binding positions include 59–61 (HLR) and Asn-91. Positions 149, 176, and 229 each coordinate Zn(2+). Position 275 (Asn-275) interacts with substrate. Asp-302 contacts Zn(2+). Residue Asp-302 is part of the active site. Substrate contacts are provided by residues His-306 and 320-321 (FG).

The protein belongs to the metallo-dependent hydrolases superfamily. DHOase family. Class I DHOase subfamily. Zn(2+) is required as a cofactor.

It catalyses the reaction (S)-dihydroorotate + H2O = N-carbamoyl-L-aspartate + H(+). It functions in the pathway pyrimidine metabolism; UMP biosynthesis via de novo pathway; (S)-dihydroorotate from bicarbonate: step 3/3. In terms of biological role, catalyzes the reversible cyclization of carbamoyl aspartate to dihydroorotate. The sequence is that of Dihydroorotase from Shouchella clausii (strain KSM-K16) (Alkalihalobacillus clausii).